The chain runs to 364 residues: Aminomethyltransferase (364 aa).

Belongs to the GcvT family. The glycine cleavage system is composed of four proteins: P, T, L and H.

The catalysed reaction is N(6)-[(R)-S(8)-aminomethyldihydrolipoyl]-L-lysyl-[protein] + (6S)-5,6,7,8-tetrahydrofolate = N(6)-[(R)-dihydrolipoyl]-L-lysyl-[protein] + (6R)-5,10-methylene-5,6,7,8-tetrahydrofolate + NH4(+). In terms of biological role, the glycine cleavage system catalyzes the degradation of glycine. In Shigella sonnei (strain Ss046), this protein is Aminomethyltransferase.